Reading from the N-terminus, the 287-residue chain is Pyridoxal 5'-phosphate synthase subunit PdxS (287 aa).

Asp21 is a D-ribose 5-phosphate binding site. The active-site Schiff-base intermediate with D-ribose 5-phosphate is the Lys78. Gly150 lines the D-ribose 5-phosphate pocket. Arg162 serves as a coordination point for D-glyceraldehyde 3-phosphate. D-ribose 5-phosphate is bound by residues Gly211 and 232 to 233; that span reads GS.

Belongs to the PdxS/SNZ family. In terms of assembly, in the presence of PdxT, forms a dodecamer of heterodimers.

The catalysed reaction is aldehydo-D-ribose 5-phosphate + D-glyceraldehyde 3-phosphate + L-glutamine = pyridoxal 5'-phosphate + L-glutamate + phosphate + 3 H2O + H(+). Its pathway is cofactor biosynthesis; pyridoxal 5'-phosphate biosynthesis. Its function is as follows. Catalyzes the formation of pyridoxal 5'-phosphate from ribose 5-phosphate (RBP), glyceraldehyde 3-phosphate (G3P) and ammonia. The ammonia is provided by the PdxT subunit. Can also use ribulose 5-phosphate and dihydroxyacetone phosphate as substrates, resulting from enzyme-catalyzed isomerization of RBP and G3P, respectively. In Tropheryma whipplei (strain Twist) (Whipple's bacillus), this protein is Pyridoxal 5'-phosphate synthase subunit PdxS.